The following is a 360-amino-acid chain: Phosphoserine aminotransferase (360 aa).

Arg41 serves as a coordination point for L-glutamate. Residues Trp101, Thr152, Asp172, and Gln195 each coordinate pyridoxal 5'-phosphate. Residue Lys196 is modified to N6-(pyridoxal phosphate)lysine. 237–238 serves as a coordination point for pyridoxal 5'-phosphate; the sequence is NT.

This sequence belongs to the class-V pyridoxal-phosphate-dependent aminotransferase family. SerC subfamily. As to quaternary structure, homodimer. Pyridoxal 5'-phosphate is required as a cofactor.

The protein resides in the cytoplasm. It carries out the reaction O-phospho-L-serine + 2-oxoglutarate = 3-phosphooxypyruvate + L-glutamate. It catalyses the reaction 4-(phosphooxy)-L-threonine + 2-oxoglutarate = (R)-3-hydroxy-2-oxo-4-phosphooxybutanoate + L-glutamate. The protein operates within amino-acid biosynthesis; L-serine biosynthesis; L-serine from 3-phospho-D-glycerate: step 2/3. It participates in cofactor biosynthesis; pyridoxine 5'-phosphate biosynthesis; pyridoxine 5'-phosphate from D-erythrose 4-phosphate: step 3/5. Functionally, catalyzes the reversible conversion of 3-phosphohydroxypyruvate to phosphoserine and of 3-hydroxy-2-oxo-4-phosphonooxybutanoate to phosphohydroxythreonine. The protein is Phosphoserine aminotransferase of Burkholderia ambifaria (strain ATCC BAA-244 / DSM 16087 / CCUG 44356 / LMG 19182 / AMMD) (Burkholderia cepacia (strain AMMD)).